Consider the following 210-residue polypeptide: MEWMRSRVGTLGLWVRLLLAVFLLGVYQAYPIPDSSPLLQFGGQVRQRYLYTDDDQDTEAHLEIREDGTVVGAAHRSPESLLELKALKPGVIQILGVKASRFLCQQPDGALYGSPHFDPEACSFRELLLEDGYNVYQSEAHGLPLRLPQKDSPNQDATSWGPVRFLPMPGLLHEPQDQAGFLPPEPPDVGSSDPLSMVEPLQGRSPSYAS.

Residues 1-28 (MEWMRSRVGTLGLWVRLLLAVFLLGVYQ) form the signal peptide. Positions 144–210 (PLRLPQKDSP…LQGRSPSYAS (67 aa)) are disordered.

This sequence belongs to the heparin-binding growth factors family. Interacts (via C-terminus) with KLB; this interaction is direct. Interacts with FGFR4. As to expression, most abundantly expressed in the liver, also expressed in the thymus at lower levels. Expressed in skeletal muscle (at protein level). Secreted in plasma (at protein level).

It localises to the secreted. In terms of biological role, stimulates glucose uptake in differentiated adipocytes via the induction of glucose transporter SLC2A1/GLUT1 expression (but not SLC2A4/GLUT4 expression). Activity probably requires the presence of KLB. Regulates systemic glucose homeostasis and insulin sensitivity. This Mus musculus (Mouse) protein is Fibroblast growth factor 21 (Fgf21).